A 158-amino-acid polypeptide reads, in one-letter code: Small ribosomal subunit protein uS17 (158 aa).

A2 is modified (N-acetylalanine). Position 22 is a citrulline (R22). N6-acetyllysine is present on residues K38, K45, and K58. C60 carries S-palmitoyl cysteine lipidation. S67 carries the post-translational modification Phosphoserine. R69 is modified (omega-N-methylarginine). S110 bears the Phosphoserine mark.

This sequence belongs to the universal ribosomal protein uS17 family. As to quaternary structure, component of the small ribosomal subunit. Part of the small subunit (SSU) processome, composed of more than 70 proteins and the RNA chaperone small nucleolar RNA (snoRNA) U3. In terms of processing, citrullinated by PADI4.

It is found in the cytoplasm. Its subcellular location is the nucleus. The protein localises to the nucleolus. Functionally, component of the small ribosomal subunit. The ribosome is a large ribonucleoprotein complex responsible for the synthesis of proteins in the cell. Part of the small subunit (SSU) processome, first precursor of the small eukaryotic ribosomal subunit. During the assembly of the SSU processome in the nucleolus, many ribosome biogenesis factors, an RNA chaperone and ribosomal proteins associate with the nascent pre-rRNA and work in concert to generate RNA folding, modifications, rearrangements and cleavage as well as targeted degradation of pre-ribosomal RNA by the RNA exosome. This Mus musculus (Mouse) protein is Small ribosomal subunit protein uS17 (Rps11).